Reading from the N-terminus, the 318-residue chain is Carnitine monooxygenase reductase subunit (318 aa).

An FAD-binding FR-type domain is found at tyrosine 5 to alanine 107. In terms of domain architecture, 2Fe-2S ferredoxin-type spans phenylalanine 233–leucine 318. The [2Fe-2S] cluster site is built by cysteine 267, cysteine 272, cysteine 275, and cysteine 305.

Belongs to the PDR/VanB family. CntB subfamily. As to quaternary structure, composed of an oxygenase subunit (cntA) and a reductase subunit (cntB). The cofactor is FMN. It depends on [2Fe-2S] cluster as a cofactor.

It carries out the reaction (R)-carnitine + NADH + O2 + H(+) = (3R)-3-hydroxy-4-oxobutanoate + trimethylamine + NAD(+) + H2O. The enzyme catalyses (R)-carnitine + NADPH + O2 + H(+) = (3R)-3-hydroxy-4-oxobutanoate + trimethylamine + NADP(+) + H2O. The protein operates within amine and polyamine metabolism; carnitine metabolism. Its function is as follows. Converts carnitine to trimethylamine and malic semialdehyde. This is Carnitine monooxygenase reductase subunit from Acinetobacter baumannii (strain ATCC 19606 / DSM 30007 / JCM 6841 / CCUG 19606 / CIP 70.34 / NBRC 109757 / NCIMB 12457 / NCTC 12156 / 81).